Consider the following 125-residue polypeptide: Calcitonin receptor-stimulating peptide 1 (125 aa).

The first 25 residues, 1 to 25 (MGFWKFPPFLVLSILVLYQAGMFHA), serve as a signal peptide directing secretion. The propeptide occupies 26–77 (APFRSVFDGRFDPATLDEEESRLLLAAMVNDYEQMRARESEKAQKTEGSRIQ). Cysteines 81 and 86 form a disulfide.

This sequence belongs to the calcitonin family.

It localises to the secreted. Stimulates cAMP production in porcine kidney cell line LLC-PK1 via the calcitonin receptor (CT) but not via the CT-like (CL) receptor. In Capra hircus (Goat), this protein is Calcitonin receptor-stimulating peptide 1 (CRSP1).